We begin with the raw amino-acid sequence, 112 residues long: 2Fe-2S ferredoxin (112 aa).

Residues 5–107 (IKVTFIVNDG…GIKVRLPSAT (103 aa)) form the 2Fe-2S ferredoxin-type domain. [2Fe-2S] cluster is bound by residues Cys-42, Cys-48, Cys-51, and Cys-88.

It belongs to the adrenodoxin/putidaredoxin family. [2Fe-2S] cluster is required as a cofactor.

Ferredoxin are iron-sulfur proteins that transfer electrons in a wide variety of metabolic reactions. The sequence is that of 2Fe-2S ferredoxin (fdxB) from Rickettsia felis (strain ATCC VR-1525 / URRWXCal2) (Rickettsia azadi).